The following is a 335-amino-acid chain: MAPLGDGGAAAAAASNNLVVSFGEMLIDFVPDVAGLSLAESGGFVKAPGGAPANVACAIAKLGGSSAFVGKFGDDEFGHMLVNILKQNNVNAEGCLFDKHARTALAFVTLKHDGEREFMFYRNPSADMLLTEAELDLGLVRRARVFHYGSISLISEPCRSAHMAAMRAAKAAGVLCSYDPNVRLPLWPSPDAAREGILSIWKEADFIKVSDDEVAFLTRGDANDEKNVLSLWFDGLKLLVVTDGDKGCRYFTKDFKGSVPGFKVDTVDTTGAGDAFVGSLLVNVAKDDSIFHNEEKLREALKFSNACGAICTTKKGAIPALPTVATAQDLIAKAN.

Belongs to the carbohydrate kinase PfkB family. Expressed in roots, at higher levels in stems, and hardly detectable in leaves.

It carries out the reaction D-fructose + ATP = D-fructose 6-phosphate + ADP + H(+). It functions in the pathway glycan biosynthesis; starch biosynthesis. Its activity is regulated as follows. Inhibited at high fructose. In terms of biological role, may play an important role in maintaining the flux of carbon towards starch formation. May also be involved in a sugar-sensing pathway. This Zea mays (Maize) protein is Fructokinase-2 (FRK2).